Reading from the N-terminus, the 632-residue chain is Cyclic GMP-AMP synthase-like receptor 2 (632 aa).

3 residues coordinate Mg(2+): Asp71, Asp73, and Asp181. Asp295 lines the Mn(2+) pocket.

Belongs to the mab-21 family. Requires Mg(2+) as cofactor. The cofactor is Mn(2+).

Nucleotidyltransferase that catalyzes the formation of some cyclic nucleotide and plays a key role in innate immunity. Directly binds some unknown ligand, activating the nucleotidyltransferase activity, leading to synthesis of a second messenger that binds to and activates Sting, thereby triggering the immune response via activation of the NF-kappa-B transcription factor. The polypeptide is Cyclic GMP-AMP synthase-like receptor 2 (Crassostrea virginica (Eastern oyster)).